The chain runs to 621 residues: UvrABC system protein C (621 aa).

Positions 20-106 (TQSGIYQFFD…IKSLKPKYNI (87 aa)) constitute a GIY-YIG domain. Positions 212–247 (KALLKILESKMHTLSHNLQFEEAAIMRDRIQKITQM) constitute a UVR domain.

It belongs to the UvrC family. In terms of assembly, interacts with UvrB in an incision complex.

The protein resides in the cytoplasm. Functionally, the UvrABC repair system catalyzes the recognition and processing of DNA lesions. UvrC both incises the 5' and 3' sides of the lesion. The N-terminal half is responsible for the 3' incision and the C-terminal half is responsible for the 5' incision. The chain is UvrABC system protein C from Helicobacter hepaticus (strain ATCC 51449 / 3B1).